Here is a 678-residue protein sequence, read N- to C-terminus: MAAHHRQNTAGRRKVQVSYVIRDEVEKYNRNGVNALQLDPALNRLFTAGRDSIIRIWSVNQHKQDPYIASMEHHTDWVNDIVLCCNGKTLISASSDTTVKVWNAHKGFCMSTLRTHKDYVKALAYAKDKELVASAGLDRQIFLWDVNTLTALTASNNTVTTSSLSGNKDSIYSLAMNQMGTVIVSGSTEKVLRVWDPRTCAKLMKLKGHTDNVKALLLNRDGTQCLSGSSDGTIRLWSLGQQRCIATYRVHDEGVWALQVNEAFTHVYSGGRDRKIYCTDLRNPDIRVLICEEKAPVLKMELDRSADPPPAIWVATTKSSVNKWTLKGIHNFRASGDYDNDCTNPIPPLCTQPDQVIKGGASIIQCHILNDKRHILTKDTNNNVAYWDVLKACKVEDLGKVDFEEEIKKRFKMVYVPNWFSVDLKTGMLTITLDESDCFAAWVSAKDAGFSSPDGSDPKLNLGGLLLQALLEYWPRTHINPMDEEENEINHAVNGEQENRVQKGNGYFQVPPHTPVIFGEAGGRTLFRLLCRDSGGETESMLLNETVPQWVIDITVDKNMPKFNKIPFYLQPHSSSGAKTLKKDRLSASDMLQVRKVMEHVYEKIINLDNESQTTSSSNNEKAGEQEKEEDIAVLAEEKIELLCQDQVLDPNMDLRTVKHFIWKSGGDLTLHYRQKST.

8 WD repeats span residues 28 to 67, 73 to 112, 115 to 154, 166 to 205, 208 to 247, 250 to 289, 292 to 334, and 358 to 452; these read YNRN…QDPY, HHTD…CMST, THKD…ALTA, GNKD…KLMK, GHTD…CIAT, VHDE…IRVL, EEKA…NFRA, and KGGA…GFSS. Residues 608 to 629 form a disordered region; it reads LDNESQTTSSSNNEKAGEQEKE. Residues 610–621 are compositionally biased toward low complexity; the sequence is NESQTTSSSNNE.

Belongs to the WD repeat WDR48 family.

The protein localises to the nucleus. The protein resides in the cytoplasm. It localises to the lysosome. It is found in the late endosome. Its function is as follows. Regulator of deubiquitinating complexes, which acts as a strong activator of USP1, USP12 and USP46. Enhances the USP1-mediated deubiquitination of FANCD2; USP1 being almost inactive by itself. Activates deubiquitination by increasing the catalytic turnover without increasing the affinity of deubiquitinating enzymes for the substrate. Also activates deubiquitinating activity of complexes containing USP12. Docks at the distal end of the USP12 fingers domain and induces a cascade of structural changes leading to the activation of the enzyme. Together with RAD51AP1, promotes DNA repair by stimulating RAD51-mediated homologous recombination. Binds single-stranded DNA (ssDNA) and double-stranded DNA (dsDNA). DNA-binding is required both for USP1-mediated deubiquitination of FANCD2 and stimulation of RAD51-mediated homologous recombination: both WDR48/UAF1 and RAD51AP1 have coordinated role in DNA-binding during these processes. Together with ATAD5 and by regulating USP1 activity, has a role in PCNA-mediated translesion synthesis (TLS) by deubiquitinating monoubiquitinated PCNA. Together with ATAD5, has a role in recruiting RAD51 to stalled forks during replication stress. The chain is WD repeat-containing protein 48 (WDR48) from Gallus gallus (Chicken).